The following is a 148-amino-acid chain: Urease accessory protein UreE (148 aa).

It belongs to the UreE family.

It is found in the cytoplasm. Its function is as follows. Involved in urease metallocenter assembly. Binds nickel. Probably functions as a nickel donor during metallocenter assembly. In Bacillus sp. (strain TB-90), this protein is Urease accessory protein UreE.